The sequence spans 323 residues: Calcium homeostasis modulator protein 2 (323 aa).

Over M1–V21 the chain is Cytoplasmic. Residues L14–F39 form a central pore region. Residues M22–A43 traverse the membrane as a helical segment. Topologically, residues F44 to R52 are extracellular. Intrachain disulfides connect C46/C130 and C48/C162. A helical transmembrane segment spans residues N53–N76. Topologically, residues N77 to L101 are cytoplasmic. The helical transmembrane segment at L102–L132 threads the bilayer. The Extracellular portion of the chain corresponds to S133–R179. Residues D145–H152 form a hemichannel docking region. Residues L180–K206 form a helical membrane-spanning segment. At H207–A323 the chain is on the cytoplasmic side. Residues Y214 to F251 are intersubunit interaction.

Belongs to the CALHM family. As to quaternary structure, homo-undecamer. Two undecameric hemichannels can assemble in a head-to-head manner to form a gap junction. As to expression, neuron, astrocyte, and microglia.

Its subcellular location is the cell membrane. The enzyme catalyses ATP(in) = ATP(out). Its activity is regulated as follows. Inhibited by divalent cations such as Co(2+) and Ni(2+). In terms of biological role, pore-forming subunit of Ca(2+) homeostasis modulator channels. Mediates ATP release from astrocytes and ATP-induced Ca(2+) influx in microglia thus regulating neuronal ATP and Ca(2+) homeostasis, synaptic transmission and neuroinflammatory response. May form intercellular gap junctions. The gating mechanism remains unknown. This is Calcium homeostasis modulator protein 2 from Mus musculus (Mouse).